A 222-amino-acid polypeptide reads, in one-letter code: Transmembrane reductase CYB561D2 (222 aa).

The Cytoplasmic segment spans residues 2–17 (ALSVETESHIYRALRT). The region spanning 14–217 (ALRTVSGAAA…NQVSNAYLYR (204 aa)) is the Cytochrome b561 domain. Residues 18 to 38 (VSGAAAHLVALGFTIFVAVLA) traverse the membrane as a helical segment. The Lumenal segment spans residues 39 to 46 (RPGSSLFS). Residues 47–67 (WHPVLMSLAFSFLMTEALLVF) form a helical membrane-spanning segment. Histidine 48 contributes to the heme b binding site. Over 68–85 (SPESSLLRSLSRKGRARC) the chain is Cytoplasmic. The heme b site is built by histidine 86 and histidine 120. Residues 86–106 (HWVLQLLALLCALLGLGLVIL) form a helical membrane-spanning segment. At 107–122 (HKEQLGKAHLATWHGR) the chain is on the lumenal side. Residues 123 to 143 (AGLLAVLWAGLQCSGGVGLLY) traverse the membrane as a helical segment. Residues 144–162 (PKLLPRWPLAKLKLYHATS) are Cytoplasmic-facing. Histidine 159 serves as a coordination point for heme b. Residues 163-183 (GLVGYLLGGASLLLGMCSLWF) traverse the membrane as a helical segment. The Lumenal segment spans residues 184 to 186 (TAT). The chain crosses the membrane as a helical span at residues 187–207 (VTGGVWYLAVLCPVITSLVIM). Residues 208-222 (NQVSNAYLYRKRIQP) lie on the Cytoplasmic side of the membrane.

Requires heme b as cofactor.

It is found in the endoplasmic reticulum membrane. It localises to the cytoplasmic vesicle membrane. It catalyses the reaction monodehydro-L-ascorbate radical(out) + L-ascorbate(in) = monodehydro-L-ascorbate radical(in) + L-ascorbate(out). It carries out the reaction Fe(3+)(out) + L-ascorbate(in) = monodehydro-L-ascorbate radical(in) + Fe(2+)(out) + H(+). In terms of biological role, transmembrane reductase that may use ascorbate as an electron donor in the cytoplasm and transfer electrons across endoplasmic reticulum membranes to reduce monodehydro-L-ascorbate radical and iron cations Fe(3+) in the lumen of that compartment. The protein is Transmembrane reductase CYB561D2 of Bos taurus (Bovine).